The following is a 687-amino-acid chain: MKLAYWMYAGPAHIGVLRVSSSFKNVHAIMHAPLGDDYFNVMRSMLERERDFTPVTASIVDRHVLARGSQEKVVENITRKNKEETPDLILLTPTCTSSILQEDLHNFVESALAKPVQIDEHADHKVTQQSALSSVSPLLPLEENTLIVSELDKKLSPSSKLHINMPNICIPEGEGEGEQTKNSIFVKSATLTNLSEEELLNQEHHTKTRNHSDVILADVNHYRVNELQAADRTLEQIVRYYISQAQKQNCLNITKTAKPSVNIIGIFTLGFHNQHDCRELKRLFNDLGIQINEIIPEGGNVHNLKKLPQAWFNFVPYREIGLMTAMYLKSEFNMPYVAITPMGLIDTAACIRSICKIITTQLLNQTATVQEPSKFIYPKATSLEQTNILETSQKETILKDNPDSGNTLSTTVEEIETLFNKYIDQQTRFVSQAAWFSRSIDCQNLTGKKAVVFGDATHSAAMTKLLAREMGIKVSCAGTYCKHDADWFREQVSGFCDQVLITDDHTQVGDMIAQLEPAAIFGTQMERHVGKRLDIPCGVISAPVHIQNFPLGYRPFLGYEGTNQIADLVYNSFNLGMEDHLLQIFGGHDSENNSSIATHLNTNNAINLAPGYLPEGEGSSRTSNVVSTISSEKKAIVWSPEGLAELNKVPGFVRGKVKRNTEKYALQKNCSMITVEVMYAAKEALSA.

A [4Fe-4S] cluster-binding site is contributed by aspartate 36. Aspartate 441 functions as the Proton donor in the catalytic mechanism. Glycine 576 to methionine 577 provides a ligand contact to substrate.

It belongs to the ChlB/BchB/BchZ family. As to quaternary structure, protochlorophyllide reductase is composed of three subunits; ChlL, ChlN and ChlB. Forms a heterotetramer of two ChlB and two ChlN subunits. The cofactor is [4Fe-4S] cluster.

Its subcellular location is the plastid. The protein resides in the chloroplast. The enzyme catalyses chlorophyllide a + oxidized 2[4Fe-4S]-[ferredoxin] + 2 ADP + 2 phosphate = protochlorophyllide a + reduced 2[4Fe-4S]-[ferredoxin] + 2 ATP + 2 H2O. Its pathway is porphyrin-containing compound metabolism; chlorophyll biosynthesis (light-independent). In terms of biological role, component of the dark-operative protochlorophyllide reductase (DPOR) that uses Mg-ATP and reduced ferredoxin to reduce ring D of protochlorophyllide (Pchlide) to form chlorophyllide a (Chlide). This reaction is light-independent. The NB-protein (ChlN-ChlB) is the catalytic component of the complex. The sequence is that of Light-independent protochlorophyllide reductase subunit B from Chlamydomonas reinhardtii (Chlamydomonas smithii).